We begin with the raw amino-acid sequence, 441 residues long: Interferon-related developmental regulator 2 (441 aa).

Residues 1-15 (MPRARKGNTPRKGGQ) show a composition bias toward basic residues. Positions 1–72 (MPRARKGNTP…TVDEQGPQED (72 aa)) are disordered. Acidic residues predominate over residues 63 to 72 (TVDEQGPQED).

It belongs to the IFRD family. As to quaternary structure, associates with ribosomes; promoting ribosome inactivation.

Its function is as follows. Ribosome-binding protein that acts as an inhibitor of mRNA translation by promoting ribosome inactivation. Associates with the P- and E-sites of the ribosome and inserts a C-terminal helix into the mRNA exit channel to preclude translation. In Oryctolagus cuniculus (Rabbit), this protein is Interferon-related developmental regulator 2.